We begin with the raw amino-acid sequence, 131 residues long: Putative protein PTGES3L (131 aa).

In terms of domain architecture, CS spans 3 to 91; the sequence is RQPARTLWYD…KEKVAWPRLT (89 aa).

Belongs to the p23/wos2 family.

This Mus musculus (Mouse) protein is Putative protein PTGES3L (Ptges3l).